Reading from the N-terminus, the 52-residue chain is Large ribosomal subunit protein bL33 (52 aa).

Belongs to the bacterial ribosomal protein bL33 family.

The sequence is that of Large ribosomal subunit protein bL33 from Anaeromyxobacter dehalogenans (strain 2CP-C).